We begin with the raw amino-acid sequence, 1176 residues long: MSITCELLNLTSKKAKKSSSSDKKWLKKPLFFLILCGSLVIVLVMFLRLGRSQKEETDSCNGEEKVLYRHQNVTRSEIHDLVSLFSDSDQVTSFECHKESSPGMWTNYGITCSLSVRSDKQETRGLPWNLGLGHSISSTSCMCGNLEPILQQPENLEEENHEEGLEQGLSSYLRNAWWCLILGVLVCHKIYVSHSKARGERKEKVHLQEALAPKKQQQRAQTSSRGAGRWRKNILLLGILGGVSFSVWWFWDTNEEIIMKRRETLANMCDERARVLQDQFNVSLNHVHALSILVSTFHHGKIPSAIDQRTFEEYTERTNFERPLTSGVAYALKVPHSEREKFEKEHGWAIKKMETEDQTVVQDCVPENFDPAPIQDEYAPVIFAQETVSHIVSVDMMSGEEDRENILRARASGKGVLTSPFKLLKSNHLGVVLTFAVYDTSLPPDATEEQRVEATIGYLGASYDMPSLVEKLLHQLASKQTIAVDVYDTTNTSGLIKMYGSEIGDISEQHISSLDFGDPSRNHEMHCRFKHKLPIPWTAITPSILVLVITFLVGYILYEAINRIATVEEDCQKMRELKARAEAADIAKSQFLATVSHEIRTPMNGVLGMLKMLMDTDLDAKQMDYAQTAHGSGKDLTSLINEVLDQAKIESGRLELENVPFDMRFILDNVSSLLSGKANEKGIELAVYVSSQVPDVVVGDPSRFRQIITNLVGNSIKFTQERGHIFISVHLADEVKEPLTIEDAVLKQRLALGCSESGETVSGFPAVNAWGSWKNFKTCYSTESQNSDQIKLLVTVEDTGVGIPVDAQGRIFTPFMQADSSTSRTYGGTGIGLSISKRLVELMQGEMGFVSEPGIGSTFSFTGVFGKAETNTSITKLERFDLAIQEFTGLRALVIDNRNIRAEVTRYELRRLGISADIVSSLRMACTCCISKLENLAMILIDKDAWNKEEFSVLDELFTRSKVTFTRVPKIFLLATSATLTERSEMKSTGLIDEVVIKPLRMSVLICCLQETLVNGKKRQPNRQRRNLGHLLREKQILVVDDNLVNRRVAEGALKKYGAIVTCVESGKAALAMLKPPHNFDACFMDLQMPEMDGFEATRRVRELEREINKKIASGEVSAEMFCKFSSWHVPILAMTADVIQATHEECMKCGMDGYVSKPFEEEVLYTAVARFFEPC.

At 1–29 (MSITCELLNLTSKKAKKSSSSDKKWLKKP) the chain is on the cytoplasmic side. Residues 30–50 (LFFLILCGSLVIVLVMFLRLG) form a helical membrane-spanning segment. At 51–174 (RSQKEETDSC…LEQGLSSYLR (124 aa)) the chain is on the extracellular side. The helical transmembrane segment at 175-195 (NAWWCLILGVLVCHKIYVSHS) threads the bilayer. Topologically, residues 196–232 (KARGERKEKVHLQEALAPKKQQQRAQTSSRGAGRWRK) are cytoplasmic. A helical transmembrane segment spans residues 233-253 (NILLLGILGGVSFSVWWFWDT). Residues 254–536 (NEEIIMKRRE…CRFKHKLPIP (283 aa)) lie on the Extracellular side of the membrane. The CHASE domain maps to 302–526 (IPSAIDQRTF…GDPSRNHEMH (225 aa)). Residues 537 to 557 (WTAITPSILVLVITFLVGYIL) traverse the membrane as a helical segment. Over 558-1176 (YEAINRIATV…TAVARFFEPC (619 aa)) the chain is Cytoplasmic. One can recognise a Histidine kinase domain in the interval 594–867 (TVSHEIRTPM…TFSFTGVFGK (274 aa)). Phosphohistidine; by autocatalysis is present on His597. Response regulatory domains lie at 891-1013 (RALV…QETL) and 1036-1173 (QILV…ARFF). 2 positions are modified to 4-aspartylphosphate: Asp942 and Asp1086.

As to quaternary structure, self-interacts. Interacts with AHK3, AHP1, AHP2, AHP3, AHP5, ATAF2, AT2S3, BETAA-AD, CYP20-2, DRP1A, HIR1, HIR2, PI4KB1, PI4KG5 and At4g12060. In terms of processing, autophosphorylated predominantly on His residues. Activation probably requires a transfer of a phosphate group between a His in the transmitter domain and an Asp of the receiver domain. As to expression, expressed in roots, leaves and flowers, mostly in the vascular tissues. Present in seedlings.

The protein resides in the endoplasmic reticulum membrane. The enzyme catalyses ATP + protein L-histidine = ADP + protein N-phospho-L-histidine.. Its activity is regulated as follows. Activated by cytokinins to initiate phosphorelay signaling. Cytokinins (CK) receptor related to bacterial two-component regulators. Functions as a histidine kinase and transmits the stress signal to a downstream MAPK cascade. This protein undergoes an ATP-dependent autophosphorylation at a conserved histidine residue in the kinase core, and a phosphoryl group is then transferred to a conserved aspartate residue in the receiver domain. In the presence of cytokinin, feeds phosphate to phosphorelay-integrating histidine phosphotransfer protein (HPt) and activates subsequent cascade. Involved in meristems establishment in seedlings. Redundant negative regulator of drought and salt stress responses and abscisic acid (ABA) signaling. Together with AHK3, plays a negative regulatory role in cold stress signaling via inhibition of ABA response, occurring independently of the cold acclimation pathway. Redundant positive regulator of cytokinin signaling that regulates many developmental processes including seed germination, cell division, seed size, chlorophyll retention during leaf senescence, root repression and shoot promotion. Involved in alkamides (e.g. N-isobutyl decanamide) and N-acylethanolamides (NAE) signaling that control meristematic activity and differentiation processes during plant development. Contributes to vascular bundle formation and secondary growth in a cytokinin-dependent manner, probably by promoting the maintenance of mitotic activity and/or identity of procambial cells. Together with AHK4, required for growth and reproduction promotion stimulated by the endophytic fungus Piriformospora indica in a trans-zeatin-dependent manner. Required by the cytokinin-dependent flower development regulation pathway. The chain is Histidine kinase 2 (AHK2) from Arabidopsis thaliana (Mouse-ear cress).